We begin with the raw amino-acid sequence, 98 residues long: DNA-binding protein Fis (98 aa).

Residues 74–93 (QTRAATMLGINRGTLRKKLK) constitute a DNA-binding region (H-T-H motif).

This sequence belongs to the transcriptional regulatory Fis family. Homodimer.

Its function is as follows. Activates ribosomal RNA transcription. Plays a direct role in upstream activation of rRNA promoters. The chain is DNA-binding protein Fis from Haemophilus ducreyi (strain 35000HP / ATCC 700724).